A 205-amino-acid polypeptide reads, in one-letter code: Urease accessory protein UreE (205 aa).

The span at alanine 178–glycine 196 shows a compositional bias: basic residues. Positions alanine 178–serine 205 are disordered.

It belongs to the UreE family.

The protein localises to the cytoplasm. Its function is as follows. Involved in urease metallocenter assembly. Binds nickel. Probably functions as a nickel donor during metallocenter assembly. This is Urease accessory protein UreE from Bordetella pertussis (strain Tohama I / ATCC BAA-589 / NCTC 13251).